A 186-amino-acid polypeptide reads, in one-letter code: Adenylate kinase (186 aa).

An ATP-binding site is contributed by 14-19; sequence GAGKGT. Residues 34-63 are NMP; that stretch reads STGDILRDHVARGTPLGERVRPIMERGDLV. AMP is bound by residues Thr35, Arg40, 61–63, 84–87, and Gln91; these read DLV and GFPR. The segment at 125–135 is LID; sequence RRAELEGRSDD. Residue Arg126 participates in ATP binding. AMP-binding residues include Arg132 and Arg143. ATP is bound at residue Gly171.

This sequence belongs to the adenylate kinase family. As to quaternary structure, monomer.

The protein resides in the cytoplasm. The enzyme catalyses AMP + ATP = 2 ADP. The protein operates within purine metabolism; AMP biosynthesis via salvage pathway; AMP from ADP: step 1/1. Functionally, catalyzes the reversible transfer of the terminal phosphate group between ATP and AMP. Plays an important role in cellular energy homeostasis and in adenine nucleotide metabolism. The protein is Adenylate kinase of Thermus thermophilus (strain ATCC BAA-163 / DSM 7039 / HB27).